Reading from the N-terminus, the 340-residue chain is UDP-3-O-(3-hydroxymyristoyl)glucosamine N-acyltransferase (340 aa).

Residue H239 is the Proton acceptor of the active site.

The protein belongs to the transferase hexapeptide repeat family. LpxD subfamily. Homotrimer.

It catalyses the reaction a UDP-3-O-[(3R)-3-hydroxyacyl]-alpha-D-glucosamine + a (3R)-hydroxyacyl-[ACP] = a UDP-2-N,3-O-bis[(3R)-3-hydroxyacyl]-alpha-D-glucosamine + holo-[ACP] + H(+). The catalysed reaction is UDP-3-O-[(3R)-3-hydroxytetradecanoyl]-alpha-D-glucosamine + (3R)-hydroxytetradecanoyl-[ACP] = UDP-2-N,3-O-bis[(3R)-3-hydroxytetradecanoyl]-alpha-D-glucosamine + holo-[ACP] + H(+). The protein operates within glycolipid biosynthesis; lipid IV(A) biosynthesis; lipid IV(A) from (3R)-3-hydroxytetradecanoyl-[acyl-carrier-protein] and UDP-N-acetyl-alpha-D-glucosamine: step 3/6. Functionally, catalyzes the N-acylation of UDP-3-O-(hydroxytetradecanoyl)glucosamine using 3-hydroxytetradecanoyl-ACP as the acyl donor. Is involved in the biosynthesis of lipid A, a phosphorylated glycolipid that anchors the lipopolysaccharide to the outer membrane of the cell. The chain is UDP-3-O-(3-hydroxymyristoyl)glucosamine N-acyltransferase from Yersinia enterocolitica.